We begin with the raw amino-acid sequence, 845 residues long: Ribosome-releasing factor 2, mitochondrial (845 aa).

Residues 1-28 (MIIATSLRSQTFCTWRAWRAVHSTAVRL) constitute a mitochondrion transit peptide. Residues 38 to 330 (DRTRNIGIIA…GVVKYLPSPL (293 aa)) enclose the tr-type G domain. GTP-binding positions include 47-54 (AHIDAGKT), 111-115 (DTPGH), and 165-168 (NKMD).

The protein belongs to the TRAFAC class translation factor GTPase superfamily. Classic translation factor GTPase family. EF-G/EF-2 subfamily.

It localises to the mitochondrion. Mitochondrial GTPase that mediates the disassembly of ribosomes from messenger RNA at the termination of mitochondrial protein biosynthesis. Not involved in the GTP-dependent ribosomal translocation step during translation elongation. This is Ribosome-releasing factor 2, mitochondrial from Scheffersomyces stipitis (strain ATCC 58785 / CBS 6054 / NBRC 10063 / NRRL Y-11545) (Yeast).